We begin with the raw amino-acid sequence, 224 residues long: Thiamine-phosphate synthase (224 aa).

4-amino-2-methyl-5-(diphosphooxymethyl)pyrimidine contacts are provided by residues 43–47 and Asn75; that span reads QYRPK. Mg(2+) contacts are provided by Asp76 and Asp95. Ser114 contributes to the 4-amino-2-methyl-5-(diphosphooxymethyl)pyrimidine binding site. Residue 141–143 coordinates 2-[(2R,5Z)-2-carboxy-4-methylthiazol-5(2H)-ylidene]ethyl phosphate; it reads SAT. Position 144 (Lys144) interacts with 4-amino-2-methyl-5-(diphosphooxymethyl)pyrimidine. Gly171 contacts 2-[(2R,5Z)-2-carboxy-4-methylthiazol-5(2H)-ylidene]ethyl phosphate.

It belongs to the thiamine-phosphate synthase family. Mg(2+) serves as cofactor.

The enzyme catalyses 2-[(2R,5Z)-2-carboxy-4-methylthiazol-5(2H)-ylidene]ethyl phosphate + 4-amino-2-methyl-5-(diphosphooxymethyl)pyrimidine + 2 H(+) = thiamine phosphate + CO2 + diphosphate. The catalysed reaction is 2-(2-carboxy-4-methylthiazol-5-yl)ethyl phosphate + 4-amino-2-methyl-5-(diphosphooxymethyl)pyrimidine + 2 H(+) = thiamine phosphate + CO2 + diphosphate. It catalyses the reaction 4-methyl-5-(2-phosphooxyethyl)-thiazole + 4-amino-2-methyl-5-(diphosphooxymethyl)pyrimidine + H(+) = thiamine phosphate + diphosphate. It participates in cofactor biosynthesis; thiamine diphosphate biosynthesis; thiamine phosphate from 4-amino-2-methyl-5-diphosphomethylpyrimidine and 4-methyl-5-(2-phosphoethyl)-thiazole: step 1/1. Its function is as follows. Condenses 4-methyl-5-(beta-hydroxyethyl)thiazole monophosphate (THZ-P) and 2-methyl-4-amino-5-hydroxymethyl pyrimidine pyrophosphate (HMP-PP) to form thiamine monophosphate (TMP). The sequence is that of Thiamine-phosphate synthase from Methylococcus capsulatus (strain ATCC 33009 / NCIMB 11132 / Bath).